The primary structure comprises 95 residues: HssA/B-like protein 45 (95 aa).

A disordered region spans residues 1–31 (MTLFSSISSISNPMTSSKSSIASFGSGTSMS).

Belongs to the hssA/B family.

This chain is HssA/B-like protein 45 (hssl45), found in Dictyostelium discoideum (Social amoeba).